Here is a 62-residue protein sequence, read N- to C-terminus: Large ribosomal subunit protein uL30 (62 aa).

Belongs to the universal ribosomal protein uL30 family. As to quaternary structure, part of the 50S ribosomal subunit.

In Prosthecochloris aestuarii (strain DSM 271 / SK 413), this protein is Large ribosomal subunit protein uL30.